The sequence spans 262 residues: Snake venom serine proteinase 1 (262 aa).

Positions 1 to 18 (MVLIRVLANLLILQLSYA) are cleaved as a signal peptide. The propeptide occupies 19-24 (QKSSEL). The Peptidase S1 domain maps to 25 to 253 (VIGGDECNIN…HLDWIQSIIA (229 aa)). 5 disulfide bridges follow: C31–C165, C52–C68, C144–C214, C176–C193, and C204–C229. H67 (charge relay system) is an active-site residue. An N-linked (GlcNAc...) asparagine glycan is attached at N105. The active-site Charge relay system is the D112. S208 (charge relay system) is an active-site residue.

Belongs to the peptidase S1 family. Snake venom subfamily. Monomer. As to expression, expressed by the venom gland.

It is found in the secreted. Functionally, snake venom serine protease that may act in the hemostasis system of the prey. The chain is Snake venom serine proteinase 1 from Crotalus adamanteus (Eastern diamondback rattlesnake).